The chain runs to 118 residues: Hydrogenase maturation factor HypA (118 aa).

Ni(2+) is bound at residue H2. Residues C73, C76, C90, and C93 each coordinate Zn(2+).

Belongs to the HypA/HybF family.

In terms of biological role, involved in the maturation of [NiFe] hydrogenases. Required for nickel insertion into the metal center of the hydrogenase. The chain is Hydrogenase maturation factor HypA from Salmonella typhi.